Reading from the N-terminus, the 419-residue chain is Putative zinc metalloprotease spr0242 (419 aa).

Residue His-18 coordinates Zn(2+). The active site involves Glu-19. His-22 serves as a coordination point for Zn(2+). A run of 3 helical transmembrane segments spans residues 169–191 (LITNFAGPMNNFILGVVVFWVLI), 345–367 (ILYFLAMISINIGIFNLIPIPAL), and 388–410 (EIETYVTLAGVVIMVVLMIAVTW).

Belongs to the peptidase M50B family. It depends on Zn(2+) as a cofactor.

It is found in the cell membrane. This Streptococcus pneumoniae (strain ATCC BAA-255 / R6) protein is Putative zinc metalloprotease spr0242.